The chain runs to 249 residues: Probable transcriptional regulatory protein Wbm0670 (249 aa).

The protein belongs to the TACO1 family.

The protein resides in the cytoplasm. In Wolbachia sp. subsp. Brugia malayi (strain TRS), this protein is Probable transcriptional regulatory protein Wbm0670.